Reading from the N-terminus, the 526-residue chain is Estrogen receptor beta (526 aa).

Residues 1–145 are modulating; that stretch reads MDIKNSPSNL…SPSSKRDAHF (145 aa). Phosphoserine; by MAPK is present on residues serine 84 and serine 102. 2 consecutive NR C4-type zinc fingers follow at residues 146–166 and 182–206; these read CAVCSDYASGYHYGVWSCEGC and CPATNQCTIDKNRRKSCQACRLRKC. Positions 146–211 form a DNA-binding region, nuclear receptor; it reads CAVCSDYASG…RLRKCYEVGM (66 aa). Residues 261–494 enclose the NR LBD domain; the sequence is SPEQLVLTLL…DLLLEMLNAH (234 aa). The interval 502 to 526 is disordered; sequence LVTGSERSRMEESESKEGSQKPQAQ. The segment covering 507–520 has biased composition (basic and acidic residues); that stretch reads ERSRMEESESKEGS.

It belongs to the nuclear hormone receptor family. NR3 subfamily. Binds DNA as a homodimer. Can form a heterodimer with ESR1. Interacts with NCOA1, NCOA3, NCOA5 and NCOA6 coactivators, leading to a strong increase of transcription of target genes. Interacts with UBE1C and AKAP13. Interacts with DNTTIP2. Interacts with CCDC62 in the presence of estradiol/E2; this interaction seems to enhance the transcription of target genes. Interacts with DNAAF4. Interacts with PRMT2. Interacts with CCAR2 (via N-terminus) in a ligand-independent manner. Interacts with RBM39, in the presence of estradiol (E2). Interacts with STUB1/CHIP. In terms of processing, phosphorylation at Ser-84 and Ser-102 recruits NCOA1.

It is found in the nucleus. Functionally, nuclear hormone receptor. Binds estrogens with an affinity similar to that of ESR1/ER-alpha, and activates expression of reporter genes containing estrogen response elements (ERE) in an estrogen-dependent manner. This Sus scrofa (Pig) protein is Estrogen receptor beta (ESR2).